Reading from the N-terminus, the 706-residue chain is Axin-related protein (706 aa).

An RGS domain is found at 72–191 (SLNLLLDDQD…LQSDICKEYA (120 aa)). Disordered regions lie at residues 278–298 (MTDGSVDGIPPYRSKKQREIH), 400–482 (TPAN…GTSA), and 585–605 (STTLKEKGKTAESVPSSGFST). Residues 402–412 (ANLSPRSQSPF) show a composition bias toward polar residues. The span at 453–462 (RSSVSSQLPR) shows a compositional bias: low complexity. Positions 624–706 (GQGLAIVYYF…KIICKVERAC (83 aa)) constitute a DIX domain.

As to quaternary structure, interacts with dvl2/dsh via DIX domains in both proteins. Forms a complex with ctnnb1/beta-catenin and gsk3b. Also forms heterodimers with mouse Axin1.

The protein localises to the cytoplasm. Its subcellular location is the cytoplasmic vesicle. Its function is as follows. Regulates the wnt signaling pathway by interacting with dvl2/dsh, which displaces gsk3b from the axnr-gsk3b complex and thus prevents degradation of ctnnb1/beta-catenin. This Xenopus laevis (African clawed frog) protein is Axin-related protein.